The primary structure comprises 466 residues: Hydroxyproline dehydrogenase (466 aa).

This sequence belongs to the proline oxidase family. Requires FAD as cofactor.

It carries out the reaction trans-4-hydroxy-L-proline + a quinone = (3R,5S)-1-pyrroline-3-hydroxy-5-carboxylate + a quinol + H(+). The enzyme catalyses L-proline + a quinone = (S)-1-pyrroline-5-carboxylate + a quinol + H(+). It functions in the pathway amino-acid degradation; L-proline degradation into L-glutamate; L-glutamate from L-proline: step 1/2. Dehydrogenase that converts trans-4-L-hydroxyproline to delta-1-pyrroline-3-hydroxy-5-carboxylate (Hyp) using a quinone as the terminal electron acceptor. Can also use proline as a substrate but with a very much lower efficiency. Does not react with other diastereomers of Hyp: trans-4-D-hydroxyproline and cis-4-L-hydroxyproline. The polypeptide is Hydroxyproline dehydrogenase (prodh2) (Xenopus laevis (African clawed frog)).